The sequence spans 408 residues: Diguanylate cyclase DgcN (408 aa).

The Cytoplasmic segment spans residues 1-24 (MMDNDNSLNKRPTFKRALRNISMT). The chain crosses the membrane as a helical span at residues 25–45 (SIFITMMLIWLLLSVTSVLTL). Topologically, residues 46 to 52 (KQYAQKN) are periplasmic. A helical transmembrane segment spans residues 53–73 (LALTAATMTYSLEAAVVFADG). Over 74–112 (PAATETLAALGQQGQFSTAEVRDKQQNILASWHYTRKDP) the chain is Cytoplasmic. A helical membrane pass occupies residues 113–133 (GDTFSNFISHWLFPAPIIQPI). The Periplasmic portion of the chain corresponds to 134–154 (RHNGETIGEVRLTARDSSISH). A helical membrane pass occupies residues 155–175 (FIWFSLAVLTGCILLASGIAI). At 176–408 (TLTRHLHNGL…KHQRAEKLVR (233 aa)) the chain is on the cytoplasmic side. An HAMP domain is found at 183–236 (NGLVEALKNITDVVHDVRSNRNFSRRVSEERIAEFHRFALDFNSLLDEMEEWQL). One can recognise a GGDEF domain in the interval 278–408 (KTSALLFLDG…KHQRAEKLVR (131 aa)). D286 contributes to the Mg(2+) binding site. Substrate contacts are provided by N294, H299, and D303. D329 contributes to the Mg(2+) binding site. Catalysis depends on D329, which acts as the Proton acceptor.

Homodimer. Interacts with the cell division proteins FtsZ and ZipA. Mg(2+) is required as a cofactor.

Its subcellular location is the cell inner membrane. The enzyme catalyses 2 GTP = 3',3'-c-di-GMP + 2 diphosphate. It functions in the pathway purine metabolism; 3',5'-cyclic di-GMP biosynthesis. Its activity is regulated as follows. Inhibited by YfiR, which prevents relocation to the midcell. A reductive stress signal is required to inactivate YfiR and turn on the DGC activity of DgcN. Bifunctional protein that catalyzes the synthesis of cyclic-di-GMP (c-di-GMP) in response to reductive stress and then dynamically relocates to the division site to arrest cell division in response to envelope stress. In the presence of high intracellular c-di-GMP levels, and in response to envelope stress, interacts with cell division proteins and halts cell division, without disassembling the Z ring, but by blocking its further progress toward cytokinesis. Part of a network that regulates cell motility by altering levels of c-di-GMP. The chain is Diguanylate cyclase DgcN from Escherichia coli (strain K12).